Consider the following 1513-residue polypeptide: MGLPLARLVAVCLVLALAKGLELQKEARSRNHVCSTWGDFHYKTFDGDVFRFPGLCDYNFASDCRDSYKEFAVHLKRGLDKAGGHSSIESVLITIKDDTIYLTHKLAVVNGAMVSTPHYSSGLLIEKNDAYTKVYSRAGLSLMWNREDALMVELDGRFQNHTCGLCGDFNGMQANNEFLSDGIRFSAIEFGNMQKINKPEVVCEDPEEVQEPESCSEHRAECERLLTSTAFEDCQARVPVELYVLACMHDRCQCPQGGACECSTLAEFSRQCSHAGGRPENWRTASLCPKKCPGNMVYLESGSPWLDTCSHLEVSSLCEEHYMDGCFCPEGTVYDDITGSGCIPVSQCHCKLHGHLYMPGQEITNDCEQCVCNAGRWMCKDLPCPETCALEGGSHITTFDGKKFTFHGDCYYVLTKTKYNDSYALLGELASCGSTDKQTCLKTVVLLTDNKKNVVAFKSGGSVLLNEMEVSLPHVAASFSIFKPSSYHIVVNTMFGLRLQIQLVPVMQLFVTLDQSAQGQVQGLCGNFNGLESDDFMTSGGMVEATGAGFANTWKAQSSCHDKLDWLDDPCPLNIESANYAEHWCSLLKRSETPFARCHLAVDPTEYYKRCKYDTCNCQNNEDCMCAALSSYARACAAKGVMLWGWRESVCNKDVHACPSSQIFMYNLTTCQQTCRSISEGDTHCLKGFAPVEGCGCPDHTFMDEKGRCVPLSKCSCYHHGLYLEAGDVILRQEERCICRNGRLQCTQVKLIGHTCLSPQILVDCNNLTALAIREPRPTSCQTLVARYYHTECISGCVCPDGLLDNGRGGCVVEDECPCIHNKQFYDSGKSIKLDCNNTCTCQKGRWECTRYACHSTCSIYGSGHYITFDGKHYDFDGHCSYVAVQDYCGQNSTGSFSIITENVPCGTTGVTCSKAIKIFIGGTELKLVDKHRVVKQLEEGHHVPFITREVGLYLVVEVSSGIIVIWDKKTTIFIKLDPSYKGNVCGLCGNFDDQTKNDFTTRDHMVVASELDFGNSWKEASTCPDVSHNPDPCSLNPHRRSWAEKQCSIIKSDVFLACHGKVDPTVFYDACVHDSCSCDTGGDCECFCSAVASYAQECTKAEACVFWRTPDLCPVFCDYYNPPDECEWHYEPCGNRSFETCRTLNGIHSNISVSYLEGCYPRCPEDRPIYDEDLKKCVSGDKCGCYIEDTRYPPGGSVPTDEICMSCTCTNTSEIICRPDEGKIINQTQDGIFCYWETCGSNGTVEKHFEICVSSTLSPTSMTSFTTTSTPISTTPISTTITTTSATATTTVPCCFWSDWINNNHPTSGNGGDRENFEHVCSAPENIECRAATDPKLDWTELGQKVQCNVSEGLICNNEDQYGTGQFELCYDYEIRVNCCFPMEYCLSTVSPTTSTPISSTPQPTSSPTTLPTTSPLTSSATSPTTSHITSTVSPTTSPTTSTTSPTTSPTTSTTSPTTSTTSPTPSPTTSTTSPTPSPTTSTTSPTPSPTTSTTSPTTSPITSPTTSTTSP.

Positions 1–20 (MGLPLARLVAVCLVLALAKG) are cleaved as a signal peptide. Residues 32–204 (HVCSTWGDFH…KINKPEVVCE (173 aa)) form the VWFD 1 domain. Disulfide bonds link cysteine 34/cysteine 166, cysteine 56/cysteine 203, cysteine 64/cysteine 163, cysteine 215/cysteine 252, cysteine 222/cysteine 247, cysteine 234/cysteine 272, cysteine 254/cysteine 260, cysteine 262/cysteine 288, cysteine 292/cysteine 326, cysteine 309/cysteine 348, cysteine 328/cysteine 342, cysteine 350/cysteine 372, cysteine 367/cysteine 384, cysteine 370/cysteine 379, cysteine 388/cysteine 525, cysteine 410/cysteine 560, cysteine 432/cysteine 440, cysteine 571/cysteine 616, cysteine 585/cysteine 611, cysteine 598/cysteine 636, cysteine 618/cysteine 624, cysteine 626/cysteine 651, cysteine 658/cysteine 695, cysteine 671/cysteine 685, cysteine 675/cysteine 715, cysteine 697/cysteine 709, cysteine 717/cysteine 739, and cysteine 737/cysteine 746. Aspartate 46 contributes to the Ca(2+) binding site. Cu(+)-binding residues include methionine 143 and methionine 151. Glutamate 153 serves as a coordination point for Cu(2+). Residue asparagine 160 is glycosylated (N-linked (GlcNAc...) asparagine). 3 residues coordinate Ca(2+): aspartate 168, asparagine 170, and glutamate 177. Cu(2+) is bound by residues histidine 274 and histidine 321. One can recognise a TIL domain in the interval 292-348 (CPGNMVYLESGSPWLDTCSHLEVSSLCEEHYMDGCFCPEGTVYDDITGSGCIPVSQC). Methionine 323 contacts Cu(+). The VWFC domain occupies 350–410 (CKLHGHLYMP…GKKFTFHGDC (61 aa)). Residues 386-561 (ETCALEGGSH…NTWKAQSSCH (176 aa)) form the VWFD 2 domain. Aspartate 400 serves as a coordination point for Ca(2+). Residue asparagine 420 is glycosylated (N-linked (GlcNAc...) asparagine). 5 residues coordinate Ca(2+): asparagine 527, asparagine 529, leucine 531, aspartate 534, and aspartate 535. N-linked (GlcNAc...) asparagine glycosylation occurs at asparagine 667. N-linked (GlcNAc...) asparagine glycosylation is present at asparagine 767. 21 disulfide bridges follow: cysteine 781-cysteine 817, cysteine 799-cysteine 811, cysteine 819-cysteine 842, cysteine 836-cysteine 854, cysteine 840-cysteine 849, cysteine 858-cysteine 989, cysteine 880-cysteine 1024, cysteine 889-cysteine 986, cysteine 906-cysteine 913, cysteine 1034-cysteine 1077, cysteine 1048-cysteine 1072, cysteine 1059-cysteine 1099, cysteine 1079-cysteine 1087, cysteine 1089-cysteine 1114, cysteine 1105-cysteine 1134, cysteine 1118-cysteine 1160, cysteine 1142-cysteine 1184, cysteine 1164-cysteine 1178, cysteine 1186-cysteine 1210, cysteine 1205-cysteine 1235, and cysteine 1208-cysteine 1218. Asparagine 837 carries an N-linked (GlcNAc...) asparagine glycan. One can recognise a VWFD 3 domain in the interval 856 to 1025 (STCSIYGSGH…NSWKEASTCP (170 aa)). Aspartate 870 lines the Ca(2+) pocket. Asparagine 892 carries an N-linked (GlcNAc...) asparagine glycan. Ca(2+) contacts are provided by asparagine 991, aspartate 993, asparagine 998, and aspartate 999. N-linked (GlcNAc...) asparagine glycans are attached at residues asparagine 1136 and asparagine 1151. Asparagine 1212, asparagine 1227, and asparagine 1243 each carry an N-linked (GlcNAc...) asparagine glycan. Residues threonine 1264, threonine 1267, threonine 1268, and threonine 1280 are each glycosylated (O-linked (GalNAc) threonine). The O-linked (GalNAc) serine glycan is linked to serine 1286. O-linked (GalNAc) threonine glycosylation is present at threonine 1290. Residues asparagine 1303, histidine 1306, serine 1309, glycine 1313, aspartate 1314, and glutamate 1316 each contribute to the Ca(2+) site. N-linked (GlcNAc...) asparagine glycosylation is present at asparagine 1350. Ca(2+) is bound by residues aspartate 1373 and tyrosine 1374. Repeat copies occupy residues 1392–1407 (SPTT…QPTS), 1408–1423 (SPTT…SSAT), 1424–1434 (SPTTSHITSTV), 1435–1445 (SPTTSPTTSTT), 1446–1456 (SPTTSPTTSTT), 1457–1467 (SPTTSTTSPTP), 1468–1478 (SPTTSTTSPTP), 1479–1489 (SPTTSTTSPTP), 1490–1500 (SPTTSTTSPTT), 1501–1511 (SPITSPTTSTT), and 1512–1513 (SP). The segment at 1392–1513 (SPTTSTPISS…TSPTTSTTSP (122 aa)) is approximate repeats. The tract at residues 1392–1513 (SPTTSTPISS…TSPTTSTTSP (122 aa)) is disordered.

Homomultimer; disulfide-linked. The N- and C-terminus mediate their assembly into higher order structures to form filaments. The CTCK domains of two polypeptides associate in the endoplasmic reticulum to generate intermolecularly disulfide-bonded dimers. These dimers progress to the Golgi apparatus, which is a more acidic environment than the endoplasmic reticulum. Under acidic conditions, the N-termini form non-covalent intermolecular interactions that juxtapose assemblies of the third VWD domain (VWD3) from different CTCK-linked dimers. The VWD3 assemblies then become disulfide bonded to one another to produce long, disulfide-linked polymers that remain highly compact until secretion. Interacts with FCGBP. Interacts with AGR2; disulfide-linked. Post-translationally, O-glycosylated. O-glycosylation is required for mucin assembly. Goblet cells synthesize two forms of mucin that differ in branched chain O-glycosylation and the site of production in the colon. In terms of processing, may undergo proteolytic cleavage in the outer mucus layer of the colon, contributing to the expanded volume and loose nature of this layer which allows for bacterial colonization in contrast to the inner mucus layer which is dense and devoid of bacteria. At low pH of 6 and under, undergoes autocatalytic cleavage in vitro in the N-terminal region of the fourth VWD domain. It is likely that this also occurs in vivo and is triggered by the low pH of the late secretory pathway. As to expression, expressed in intestine and airway.

The protein localises to the secreted. In terms of biological role, coats the epithelia of the intestines and other mucus membrane-containing organs to provide a protective, lubricating barrier against particles and infectious agents at mucosal surfaces. Major constituent of the colon mucus, which is mainly formed by large polymeric networks of MUC2 secreted by goblet cells that cover the exposed surfaces of intestine. MUC2 networks form hydrogels that guard the underlying epithelium from pathogens and other hazardous matter entering from the outside world, while permitting nutrient absorption and gas exchange. Acts as a divalent copper chaperone that protects intestinal cells from copper toxicity and facilitates nutritional copper unptake into cells. Binds both Cu(2+) and its reduced form, Cu(1+), at two juxtaposed binding sites: Cu(2+), once reduced to Cu(1+) by vitamin C (ascorbate) or other dietary antioxidants, transits to the other binding site. MUC2-bound Cu(1+) is protected from oxidation in aerobic environments, and can be released for nutritional delivery to cells. Mucin gels store antimicrobial molecules that participate in innate immunity. Mucin glycoproteins also house and feed the microbiome, lubricate tissue surfaces, and may facilitate the removal of contaminants and waste products from the body. Goblet cells synthesize two forms of MUC2 mucin that differ in branched chain O-glycosylation and the site of production in the colon: a (1) 'thick' mucus that wraps the microbiota to form fecal pellets is produced in the proximal, ascending colon. 'Thick' mucus transits along the descending colon and is lubricated by a (2) 'thin' MUC2 mucus produced in the distal colon which adheres to the 'thick' mucus. This Rattus norvegicus (Rat) protein is Mucin-2.